Reading from the N-terminus, the 92-residue chain is Small ribosomal subunit protein bS20 (92 aa).

The segment at M1 to R24 is disordered.

It belongs to the bacterial ribosomal protein bS20 family.

Its function is as follows. Binds directly to 16S ribosomal RNA. This chain is Small ribosomal subunit protein bS20, found in Rhizobium etli (strain ATCC 51251 / DSM 11541 / JCM 21823 / NBRC 15573 / CFN 42).